Here is a 328-residue protein sequence, read N- to C-terminus: RNA 3'-terminal phosphate cyclase (328 aa).

Residues Gln100 and 276-280 contribute to the ATP site; that span reads HLADQ. Residue His302 is the Tele-AMP-histidine intermediate of the active site.

The protein belongs to the RNA 3'-terminal cyclase family. Type 1 subfamily.

It localises to the cytoplasm. It catalyses the reaction a 3'-end 3'-phospho-ribonucleotide-RNA + ATP = a 3'-end 2',3'-cyclophospho-ribonucleotide-RNA + AMP + diphosphate. Functionally, catalyzes the conversion of 3'-phosphate to a 2',3'-cyclic phosphodiester at the end of RNA. The mechanism of action of the enzyme occurs in 3 steps: (A) adenylation of the enzyme by ATP; (B) transfer of adenylate to an RNA-N3'P to produce RNA-N3'PP5'A; (C) and attack of the adjacent 2'-hydroxyl on the 3'-phosphorus in the diester linkage to produce the cyclic end product. The biological role of this enzyme is unknown but it is likely to function in some aspects of cellular RNA processing. This Archaeoglobus fulgidus (strain ATCC 49558 / DSM 4304 / JCM 9628 / NBRC 100126 / VC-16) protein is RNA 3'-terminal phosphate cyclase (rtcA).